We begin with the raw amino-acid sequence, 290 residues long: Cbb3-type cytochrome c oxidase subunit FixP (290 aa).

Residues 1–32 (MTDHSEFDSVSGKTTTGHEWDGIKELNTPLPR) lie on the Cytoplasmic side of the membrane. A helical membrane pass occupies residues 33-53 (WWVICFYLTIVWAIGYWIVYP). Residues 54-290 (AWPLISSNTT…VYVHSLGGGK (237 aa)) are Periplasmic-facing. 2 Cytochrome c domains span residues 109–198 (LARA…RSLS) and 206–287 (YDAA…HSLG). 8 residues coordinate heme c: C122, C125, H126, M173, C219, C222, H223, and M264.

The protein belongs to the CcoP / FixP family. Component of the cbb3-type cytochrome c oxidase at least composed of FixN, FixO, FixQ and FixP. The cofactor is heme c.

The protein localises to the cell inner membrane. It functions in the pathway energy metabolism; oxidative phosphorylation. In terms of biological role, C-type cytochrome. Part of the cbb3-type cytochrome c oxidase complex. FixP subunit is required for transferring electrons from donor cytochrome c via its heme groups to FixO subunit. From there, electrons are shuttled to the catalytic binuclear center of FixN subunit where oxygen reduction takes place. The complex also functions as a proton pump. The sequence is that of Cbb3-type cytochrome c oxidase subunit FixP from Bradyrhizobium diazoefficiens (strain JCM 10833 / BCRC 13528 / IAM 13628 / NBRC 14792 / USDA 110).